The following is a 324-amino-acid chain: Putative F-box/kelch-repeat protein At5g28160 (324 aa).

The region spanning 7–54 is the F-box domain; it reads RPSFLSLPDEIILSCLARISRSYYPKLSLVCKTFRTLLISNELIVARL. The stretch at 170-216 is one Kelch repeat; the sequence is KIYVMGGCMADESVNWGEVFDIKTQTWEALPDPGPEFRFSSIRKIDV.

This Arabidopsis thaliana (Mouse-ear cress) protein is Putative F-box/kelch-repeat protein At5g28160.